The following is a 149-amino-acid chain: Transcription antitermination protein NusB (149 aa).

This sequence belongs to the NusB family.

Functionally, involved in transcription antitermination. Required for transcription of ribosomal RNA (rRNA) genes. Binds specifically to the boxA antiterminator sequence of the ribosomal RNA (rrn) operons. The chain is Transcription antitermination protein NusB from Acinetobacter baylyi (strain ATCC 33305 / BD413 / ADP1).